A 94-amino-acid polypeptide reads, in one-letter code: Pyrimidine/purine nucleoside phosphorylase 2 (94 aa).

The protein belongs to the nucleoside phosphorylase PpnP family.

It catalyses the reaction a purine D-ribonucleoside + phosphate = a purine nucleobase + alpha-D-ribose 1-phosphate. The enzyme catalyses adenosine + phosphate = alpha-D-ribose 1-phosphate + adenine. It carries out the reaction cytidine + phosphate = cytosine + alpha-D-ribose 1-phosphate. The catalysed reaction is guanosine + phosphate = alpha-D-ribose 1-phosphate + guanine. It catalyses the reaction inosine + phosphate = alpha-D-ribose 1-phosphate + hypoxanthine. The enzyme catalyses thymidine + phosphate = 2-deoxy-alpha-D-ribose 1-phosphate + thymine. It carries out the reaction uridine + phosphate = alpha-D-ribose 1-phosphate + uracil. The catalysed reaction is xanthosine + phosphate = alpha-D-ribose 1-phosphate + xanthine. In terms of biological role, catalyzes the phosphorolysis of diverse nucleosides, yielding D-ribose 1-phosphate and the respective free bases. Can use uridine, adenosine, guanosine, cytidine, thymidine, inosine and xanthosine as substrates. Also catalyzes the reverse reactions. This Psychrobacter cryohalolentis (strain ATCC BAA-1226 / DSM 17306 / VKM B-2378 / K5) protein is Pyrimidine/purine nucleoside phosphorylase 2.